Here is a 910-residue protein sequence, read N- to C-terminus: Short transient receptor potential channel 3 (910 aa).

The segment at 1-93 (MSTKVKKCRE…VRGPAFMFGA (93 aa)) is disordered. Residues 1–448 (MSTKVKKCRE…KILRSPFMKF (448 aa)) are Cytoplasmic-facing. Positions 19 to 29 (PEEEEDGEAEG) are enriched in acidic residues. A compositionally biased stretch (pro residues) spans 48 to 58 (PPCPRAPPSPG). Positions 59 to 68 (PDASSEGSPS) are enriched in low complexity. ANK repeat units lie at residues 100-129 (AEEE…TLNV), 135-164 (MGQN…LARI), 166-192 (DALL…FAAS), and 221-250 (PDIT…RIER). A Ca(2+)-binding site is contributed by Glu-147. A helical transmembrane segment spans residues 449–466 (VAHAASFIIFLGLLVFNA). Over 467–497 (SDRFEGITTLPNITVIDYPKQIFRVKTTQFT) the chain is Extracellular. Residue Asn-478 is glycosylated (N-linked (GlcNAc...) asparagine). Residues 498–516 (WTEMLIMVWVLGMMWSECK) traverse the membrane as a helical segment. 3 residues coordinate Ca(2+): Glu-514, Glu-517, and Asn-532. The Cytoplasmic portion of the chain corresponds to 517 to 529 (ELWLEGPREYIVQ). A helical transmembrane segment spans residues 530-551 (LWNVLDFGMLSIFIAAFTARFL). The Extracellular portion of the chain corresponds to 552 to 595 (AFLQATKAQQYVDSHVQESDLSEVTLPPEVQYFTYARDKWLPSD). A helical membrane pass occupies residues 596 to 619 (PQIISEGLYAIAVVLSFSRIAYIL). At 620–638 (PANESFGPLQISLGRTVKD) the chain is on the cytoplasmic side. The stretch at 623 to 652 (ESFGPLQISLGRTVKDIFKFMVLFIMVFLA) is one ANK 5 repeat. A helical transmembrane segment spans residues 639–662 (IFKFMVLFIMVFLAFMIGMFILYS). The Extracellular portion of the chain corresponds to 663-702 (YYLGAKVNPAFTTVEESFKTLFWSIFGLSEVTSVVLKYDH). Residues 703–728 (KFIENIGYVLYGIYNVTMVVVLLNML) form a helical membrane-spanning segment. Residues 729–910 (IAMINSSYQE…KLNPSVLRCE (182 aa)) lie on the Cytoplasmic side of the membrane. Residues Glu-860, Glu-863, Glu-865, and Asp-872 each contribute to the Ca(2+) site.

Belongs to the transient receptor (TC 1.A.4) family. STrpC subfamily. TRPC3 sub-subfamily. Homotetramer. Interacts with ITPR1, ITPR3, MX1 and RNF24. Interacts with JPH2; the interaction is involved in maintaining Ca(2+) homeostasis in skeletal muscle and is mediated by JPH2 'Ser-165' phosphorylation. In terms of tissue distribution, abundantly expressed in brain. Concentrated in cerebellar Purkinje cells and sparsely localized in cerebellar granule lyer, pontine nuclei and thalamus. Lower levels detected in other tissues.

The protein resides in the cell membrane. The catalysed reaction is Ca(2+)(in) = Ca(2+)(out). Its activity is regulated as follows. Activated by diacylglycerol (DAG) in a membrane-delimited fashion, independently of protein kinase C. Activated by inositol 1,4,5-triphosphate receptors (ITPR) with bound IP3. May be activated by internal calcium store depletion. Inhibited by intracellular Ca(2+). Forms a receptor-activated non-selective calcium permeant cation channel. May be operated by a phosphatidylinositol second messenger system activated by receptor tyrosine kinases or G-protein coupled receptors. This chain is Short transient receptor potential channel 3 (Trpc3), found in Mus musculus (Mouse).